Reading from the N-terminus, the 108-residue chain is Gibberellin-regulated protein 7 (108 aa).

Positions 1–23 are cleaved as a signal peptide; it reads MKIIVSILVLASLLLISSSLASA.

The protein belongs to the GASA family. Post-translationally, six disulfide bonds may be present.

It localises to the secreted. In terms of biological role, gibberellin-regulated protein that may function in hormonal controlled steps of development such as seed germination, flowering and seed maturation. This chain is Gibberellin-regulated protein 7 (GASA7), found in Arabidopsis thaliana (Mouse-ear cress).